Here is a 951-residue protein sequence, read N- to C-terminus: Valine--tRNA ligase (951 aa).

The short motif at 42-52 (PNVTGSLHMGH) is the 'HIGH' region element. A 'KMSKS' region motif is present at residues 554 to 558 (KMSKS). K557 is a binding site for ATP. The stretch at 880–944 (AGLINKEDEL…AEAKAKLIEQ (65 aa)) forms a coiled coil.

This sequence belongs to the class-I aminoacyl-tRNA synthetase family. ValS type 1 subfamily. In terms of assembly, monomer.

It localises to the cytoplasm. The catalysed reaction is tRNA(Val) + L-valine + ATP = L-valyl-tRNA(Val) + AMP + diphosphate. In terms of biological role, catalyzes the attachment of valine to tRNA(Val). As ValRS can inadvertently accommodate and process structurally similar amino acids such as threonine, to avoid such errors, it has a 'posttransfer' editing activity that hydrolyzes mischarged Thr-tRNA(Val) in a tRNA-dependent manner. This is Valine--tRNA ligase (valS) from Escherichia coli (strain K12).